We begin with the raw amino-acid sequence, 467 residues long: ATP synthase subunit beta, sodium ion specific (467 aa).

An ATP-binding site is contributed by 151-158; that stretch reads GGAGVGKT.

This sequence belongs to the ATPase alpha/beta chains family. F-type ATPases have 2 components, CF(1) - the catalytic core - and CF(0) - the membrane proton channel. CF(1) has five subunits: alpha(3), beta(3), gamma(1), delta(1), epsilon(1). CF(0) has three main subunits: a, b and c.

The protein resides in the cell membrane. It catalyses the reaction 4 Na(+)(in) + ATP + H2O = 4 Na(+)(out) + ADP + phosphate + H(+). Functionally, produces ATP from ADP in the presence of a sodium ion gradient across the membrane. The beta chain is the catalytic subunit. The sequence is that of ATP synthase subunit beta, sodium ion specific from Propionigenium modestum.